A 313-amino-acid chain; its full sequence is Cytochrome f (313 aa).

Residues 1–30 form the signal peptide; the sequence is MRNWSFSKAALTVSLLALSWSPFGPAEVQA. The heme site is built by Y31, C51, C54, and H55. A helical transmembrane segment spans residues 279 to 298; it reads VQGLIIFFAFVLIAQVFLVL.

Belongs to the cytochrome f family. In terms of assembly, the 4 large subunits of the cytochrome b6-f complex are cytochrome b6, subunit IV (17 kDa polypeptide, petD), cytochrome f and the Rieske protein, while the 4 small subunits are PetG, PetL, PetM and PetN. The complex functions as a dimer. Heme serves as cofactor.

The protein localises to the plastid. The protein resides in the chloroplast thylakoid membrane. In terms of biological role, component of the cytochrome b6-f complex, which mediates electron transfer between photosystem II (PSII) and photosystem I (PSI), cyclic electron flow around PSI, and state transitions. This Nephroselmis olivacea (Green alga) protein is Cytochrome f.